Here is a 226-residue protein sequence, read N- to C-terminus: Leucyl/phenylalanyl-tRNA--protein transferase (226 aa).

This sequence belongs to the L/F-transferase family.

Its subcellular location is the cytoplasm. It catalyses the reaction N-terminal L-lysyl-[protein] + L-leucyl-tRNA(Leu) = N-terminal L-leucyl-L-lysyl-[protein] + tRNA(Leu) + H(+). The enzyme catalyses N-terminal L-arginyl-[protein] + L-leucyl-tRNA(Leu) = N-terminal L-leucyl-L-arginyl-[protein] + tRNA(Leu) + H(+). The catalysed reaction is L-phenylalanyl-tRNA(Phe) + an N-terminal L-alpha-aminoacyl-[protein] = an N-terminal L-phenylalanyl-L-alpha-aminoacyl-[protein] + tRNA(Phe). Its function is as follows. Functions in the N-end rule pathway of protein degradation where it conjugates Leu, Phe and, less efficiently, Met from aminoacyl-tRNAs to the N-termini of proteins containing an N-terminal arginine or lysine. The polypeptide is Leucyl/phenylalanyl-tRNA--protein transferase (Ectopseudomonas mendocina (strain ymp) (Pseudomonas mendocina)).